A 198-amino-acid polypeptide reads, in one-letter code: Lipid A 4'-phosphatase (198 aa).

A helical membrane pass occupies residues 143 to 165; the sequence is AGQHTILQVTIGSLIAWGFAYLF.

It belongs to the lipid A LpxF 4'-phosphatase family.

It localises to the cell inner membrane. It functions in the pathway bacterial outer membrane biogenesis; LPS lipid A biosynthesis. In terms of biological role, removes the 4'-phosphate group from tetra- and hexaacylated lipid A species, has no 1-phosphatase or Kdo hydrolase activity. Absence of the 4'-phosphate group renders the bacteria resistant to host-derived cationic antimicrobial peptides (CAMP), allowing it to camouflage itself from the host innate immune response, and plays a critical role in the long-term colonization of the host's stomach. This Helicobacter pylori (strain J99 / ATCC 700824) (Campylobacter pylori J99) protein is Lipid A 4'-phosphatase.